The primary structure comprises 243 residues: NAD-dependent protein deacylase SIR2rp3 (243 aa).

The region spanning 1-239 is the Deacetylase sirtuin-type domain; sequence MKACRCITIL…PTWVDQVLKE (239 aa). Residue 12–31 participates in NAD(+) binding; it reads GAGISAESGISTFRDSNGLW. Substrate contacts are provided by Y56 and R59. 95–98 serves as a coordination point for NAD(+); that stretch reads QNVD. Catalysis depends on H113, which acts as the Proton acceptor. Residues C121 and C141 each coordinate Zn(2+). NAD(+)-binding positions include 181 to 183 and A225; that span reads GTS.

Belongs to the sirtuin family. Class III subfamily. Requires Zn(2+) as cofactor.

It is found in the mitochondrion. The catalysed reaction is N(6)-malonyl-L-lysyl-[protein] + NAD(+) + H2O = 2''-O-malonyl-ADP-D-ribose + nicotinamide + L-lysyl-[protein]. It catalyses the reaction N(6)-succinyl-L-lysyl-[protein] + NAD(+) + H2O = 2''-O-succinyl-ADP-D-ribose + nicotinamide + L-lysyl-[protein]. It carries out the reaction N(6)-glutaryl-L-lysyl-[protein] + NAD(+) + H2O = 2''-O-glutaryl-ADP-D-ribose + nicotinamide + L-lysyl-[protein]. Functionally, NAD-dependent lysine demalonylase, desuccinylase and deglutarylase that specifically removes malonyl, succinyl and glutaryl groups on target proteins. Has weak NAD-dependent protein deacetylase activity; however this activity may not be physiologically relevant in vivo. This is NAD-dependent protein deacylase SIR2rp3 (SIR2rp3) from Leishmania major.